A 537-amino-acid chain; its full sequence is Chaperonin GroEL 2 (537 aa).

Residues 29 to 32, 86 to 90, Gly412, and Asp495 contribute to the ATP site; these read TLGP and DGTTT.

Belongs to the chaperonin (HSP60) family. As to quaternary structure, forms a cylinder of 14 subunits composed of two heptameric rings stacked back-to-back. Interacts with the co-chaperonin GroES.

It is found in the cytoplasm. The enzyme catalyses ATP + H2O + a folded polypeptide = ADP + phosphate + an unfolded polypeptide.. Together with its co-chaperonin GroES, plays an essential role in assisting protein folding. The GroEL-GroES system forms a nano-cage that allows encapsulation of the non-native substrate proteins and provides a physical environment optimized to promote and accelerate protein folding. The sequence is that of Chaperonin GroEL 2 from Paenarthrobacter aurescens (strain TC1).